The sequence spans 315 residues: Vomeronasal type-1 receptor 54 (315 aa).

Over 1–15 the chain is Extracellular; the sequence is MNKMNRLSHNTEIRN. A helical transmembrane segment spans residues 16-40; it reads AIYSGVGIGISGNSFLLLFHIFKYI. Over 41–51 the chain is Cytoplasmic; it reads RGQRSRHIDLP. The chain crosses the membrane as a helical span at residues 52-71; sequence IGLLSLIHLVMLIAMSLVAT. The Extracellular portion of the chain corresponds to 72-90; the sequence is DIFMPWGRWGDTTCKCVIS. A disulfide bridge connects residues Cys85 and Cys172. Residues 91 to 112 form a helical membrane-spanning segment; sequence LYRFCRSLSLCATSLLSILQAV. The Cytoplasmic portion of the chain corresponds to 113-132; that stretch reads TLNPRNSCLEKFKRKSPHYM. The chain crosses the membrane as a helical span at residues 133–154; sequence LGCLLFLSVFYTFISSPLATYI. The Extracellular segment spans residues 155-193; sequence TAKSNLTSPSFTYITTSCSLAPMSYSFHLTVFILLTSRD. Residues 194–212 traverse the membrane as a helical segment; it reads VIFVGLMLLSSGYMVTFLG. Residues 213–239 lie on the Cytoplasmic side of the membrane; sequence RHKKQSQFLHITSFSLKPSAEKRAMRT. Residues 240–260 traverse the membrane as a helical segment; that stretch reads ILCLMSFFVLMYTLDSIVSYI. Residues 261–267 lie on the Extracellular side of the membrane; sequence RSIDDGQ. The chain crosses the membrane as a helical span at residues 268–288; sequence IFYCVHIFTAHGYATVSPFLI. Residues 289-315 are Cytoplasmic-facing; it reads LSTEKYIINIFRSTFGRMVTIILLRNR.

The protein belongs to the G-protein coupled receptor 1 family.

It is found in the cell membrane. In terms of biological role, putative pheromone receptor implicated in the regulation of social and reproductive behavior. In Mus musculus (Mouse), this protein is Vomeronasal type-1 receptor 54 (Vmn1r54).